Reading from the N-terminus, the 950-residue chain is Protocadherin alpha-13 (950 aa).

The first 29 residues, 1–29 (MLSSWQGGPRPRQLLLWLLILAAWETGSG), serve as a signal peptide directing secretion. The Extracellular portion of the chain corresponds to 30 to 697 (QLHYSVPEEA…GPEAALVDVN (668 aa)). 6 consecutive Cadherin domains span residues 34 to 133 (SVPE…PPIF), 134 to 242 (PESK…APEF), 243 to 350 (YQSV…APEV), 351 to 455 (TITS…APAF), 456 to 565 (AQPE…APAL), and 581 to 678 (MPRS…APQA). Residues N257 and N265 are each glycosylated (N-linked (GlcNAc...) asparagine). N548 carries N-linked (GlcNAc...) asparagine glycosylation. The chain crosses the membrane as a helical span at residues 698–718 (VYLIIAICAVSSLLVLTLLLY). Topologically, residues 719–950 (TALRCSAPPT…GNSTTDNSDQ (232 aa)) are cytoplasmic. 6 PXXP repeats span residues 734 to 737 (PGKP), 774 to 777 (PSLP), 799 to 802 (PRQP), 832 to 835 (PGGP), 873 to 876 (PGNP), and 891 to 894 (PGSP). A 6 X 4 AA repeats of P-X-X-P region spans residues 734-894 (PGKPTLVCSS…PDKFIIPGSP (161 aa)). 2 disordered regions span residues 780 to 806 (LGSA…NPDW) and 829 to 950 (RAGP…NSDQ). Basic and acidic residues predominate over residues 787–800 (GQREEDSECLKEPR). Positions 909 to 923 (DKSDFITFGKKEETK) are enriched in basic and acidic residues.

Its subcellular location is the cell membrane. Its function is as follows. Potential calcium-dependent cell-adhesion protein. May be involved in the establishment and maintenance of specific neuronal connections in the brain. The sequence is that of Protocadherin alpha-13 (PCDHA13) from Homo sapiens (Human).